A 329-amino-acid polypeptide reads, in one-letter code: Glucokinase (329 aa).

13–18 (GDIGGT) is an ATP binding site.

It belongs to the bacterial glucokinase family.

Its subcellular location is the cytoplasm. It carries out the reaction D-glucose + ATP = D-glucose 6-phosphate + ADP + H(+). The protein is Glucokinase of Caulobacter sp. (strain K31).